The chain runs to 212 residues: Cytidylate kinase (212 aa).

7 to 15 lines the ATP pocket; the sequence is GPAASGKGT.

This sequence belongs to the cytidylate kinase family. Type 1 subfamily.

The protein localises to the cytoplasm. The enzyme catalyses CMP + ATP = CDP + ADP. It catalyses the reaction dCMP + ATP = dCDP + ADP. The polypeptide is Cytidylate kinase (Rhodopseudomonas palustris (strain BisB5)).